The sequence spans 552 residues: Putative transport protein YE4162 (552 aa).

A run of 6 helical transmembrane segments spans residues 1-21 (MSAI…GLWI), 26-46 (VYGV…VGHF), 65-85 (FGLI…FFSS), 96-116 (FAIL…KLFA), 119-139 (LPII…LGAA), and 158-178 (MGYA…MWLI). RCK C-terminal domains are found at residues 192 to 276 (EFDS…VVGE) and 279 to 361 (DVTL…VVGN). 6 helical membrane passes run 371 to 391 (MLPV…PLFI), 393 to 413 (GFPA…ALIL), 439 to 459 (IVLF…NTLV), 464 to 484 (LAWI…VGIL), 493 to 513 (YLTL…LAFA), and 530 to 550 (VYPL…VLFW).

This sequence belongs to the AAE transporter (TC 2.A.81) family. YidE subfamily.

Its subcellular location is the cell membrane. The protein is Putative transport protein YE4162 of Yersinia enterocolitica serotype O:8 / biotype 1B (strain NCTC 13174 / 8081).